The primary structure comprises 313 residues: Ornithine carbamoyltransferase (313 aa).

Residues 57-60 (STRT), Gln84, Arg108, and 135-138 (HPCQ) contribute to the carbamoyl phosphate site. L-ornithine contacts are provided by residues Asn166, Asp230, and 234-235 (SM). Carbamoyl phosphate-binding positions include 270–271 (CL) and Arg298.

The protein belongs to the aspartate/ornithine carbamoyltransferase superfamily. OTCase family. In terms of assembly, homohexamer.

The protein resides in the cytoplasm. The catalysed reaction is carbamoyl phosphate + L-ornithine = L-citrulline + phosphate + H(+). It functions in the pathway amino-acid biosynthesis; L-arginine biosynthesis; L-arginine from L-ornithine and carbamoyl phosphate: step 1/3. Reversibly catalyzes the transfer of the carbamoyl group from carbamoyl phosphate (CP) to the N(epsilon) atom of ornithine (ORN) to produce L-citrulline. The chain is Ornithine carbamoyltransferase from Gloeobacter violaceus (strain ATCC 29082 / PCC 7421).